Consider the following 391-residue polypeptide: E3 ubiquitin-protein ligase RMND5A (391 aa).

Methionine 1 carries the N-acetylmethionine modification. Positions 114–146 (SQRLLNEVMVEHFFRQGMLDVAEELCQESGLSV) constitute a LisH domain. The CTLH domain occupies 153–210 (PFVELNRILEALKVRVLRPALEWAVSNREMLIAQNSSLEFKLHRLYFISLLMGGTTNQ). The RING-Gid-type zinc finger occupies 336–377 (CPILRQQTTDNNPPMKLVCGHIISRDALNKMFNGSKLKCPYC).

In terms of assembly, identified in the CTLH complex that contains GID4, RANBP9 and/or RANBP10, MKLN1, MAEA, RMND5A (or alternatively its paralog RMND5B), GID8, ARMC8, WDR26 and YPEL5. Within this complex, MAEA, RMND5A (or alternatively its paralog RMND5B), GID8, WDR26, and RANBP9 and/or RANBP10 form the catalytic core, while GID4, MKLN1, ARMC8 and YPEL5 have ancillary roles.

Its subcellular location is the nucleus. The protein resides in the nucleoplasm. The protein localises to the cytoplasm. The catalysed reaction is S-ubiquitinyl-[E2 ubiquitin-conjugating enzyme]-L-cysteine + [acceptor protein]-L-lysine = [E2 ubiquitin-conjugating enzyme]-L-cysteine + N(6)-ubiquitinyl-[acceptor protein]-L-lysine.. Functionally, core component of the CTLH E3 ubiquitin-protein ligase complex that selectively accepts ubiquitin from UBE2H and mediates ubiquitination and subsequent proteasomal degradation of the transcription factor HBP1. MAEA and RMND5A are both required for catalytic activity of the CTLH E3 ubiquitin-protein ligase complex. Catalytic activity of the complex is required for normal cell proliferation. The CTLH E3 ubiquitin-protein ligase complex is not required for the degradation of enzymes involved in gluconeogenesis, such as FBP1. This is E3 ubiquitin-protein ligase RMND5A (Rmnd5a) from Mus musculus (Mouse).